Here is a 171-residue protein sequence, read N- to C-terminus: uncharacterized protein (171 aa).

This is an uncharacterized protein from Ureaplasma parvum serovar 3 (strain ATCC 700970).